The following is a 207-amino-acid chain: Guanylate kinase (207 aa).

The Guanylate kinase-like domain maps to 4–184 (GTLYIVSAPS…ALSDLKTIIR (181 aa)). 11 to 18 (APSGAGKS) contacts ATP.

The protein belongs to the guanylate kinase family.

It is found in the cytoplasm. The catalysed reaction is GMP + ATP = GDP + ADP. It catalyses the reaction dZMP + ATP = dZDP + ADP. It participates in purine metabolism. Essential for recycling GMP and indirectly, cGMP. In terms of biological role, (Microbial infection) Catalyzes the phosphorylation of dZMP to dZDP, when the bacterium is infected by a phage that produces the substrate for the synthesis of dZTP (2- amino-2'-deoxyadenosine 5'-triphosphate), which is then used by the phage as a DNA polymerase substrate. The protein is Guanylate kinase of Salmonella choleraesuis (strain SC-B67).